We begin with the raw amino-acid sequence, 138 residues long: Phosphoribosyl-AMP cyclohydrolase (138 aa).

Asp-84 lines the Mg(2+) pocket. Cys-85 provides a ligand contact to Zn(2+). Mg(2+)-binding residues include Asp-86 and Asp-88. Residues Cys-102 and Cys-109 each contribute to the Zn(2+) site.

The protein belongs to the PRA-CH family. As to quaternary structure, homodimer. Mg(2+) serves as cofactor. The cofactor is Zn(2+).

It is found in the cytoplasm. The enzyme catalyses 1-(5-phospho-beta-D-ribosyl)-5'-AMP + H2O = 1-(5-phospho-beta-D-ribosyl)-5-[(5-phospho-beta-D-ribosylamino)methylideneamino]imidazole-4-carboxamide. It functions in the pathway amino-acid biosynthesis; L-histidine biosynthesis; L-histidine from 5-phospho-alpha-D-ribose 1-diphosphate: step 3/9. Its function is as follows. Catalyzes the hydrolysis of the adenine ring of phosphoribosyl-AMP. The polypeptide is Phosphoribosyl-AMP cyclohydrolase (Burkholderia cenocepacia (strain ATCC BAA-245 / DSM 16553 / LMG 16656 / NCTC 13227 / J2315 / CF5610) (Burkholderia cepacia (strain J2315))).